Consider the following 217-residue polypeptide: Outer-membrane lipoprotein LolB (217 aa).

The N-terminal stretch at 1-20 is a signal peptide; sequence MSKALRTLALSGLVLVGLSA. Residue Cys21 is the site of N-palmitoyl cysteine attachment. Cys21 carries S-diacylglycerol cysteine lipidation.

This sequence belongs to the LolB family. In terms of assembly, monomer.

The protein localises to the cell outer membrane. Plays a critical role in the incorporation of lipoproteins in the outer membrane after they are released by the LolA protein. This is Outer-membrane lipoprotein LolB from Xanthomonas oryzae pv. oryzae (strain MAFF 311018).